A 487-amino-acid polypeptide reads, in one-letter code: Probable glycine dehydrogenase (decarboxylating) subunit 2 (487 aa).

At Lys269 the chain carries N6-(pyridoxal phosphate)lysine.

It belongs to the GcvP family. C-terminal subunit subfamily. In terms of assembly, the glycine cleavage system is composed of four proteins: P, T, L and H. In this organism, the P 'protein' is a heterodimer of two subunits. Pyridoxal 5'-phosphate serves as cofactor.

The catalysed reaction is N(6)-[(R)-lipoyl]-L-lysyl-[glycine-cleavage complex H protein] + glycine + H(+) = N(6)-[(R)-S(8)-aminomethyldihydrolipoyl]-L-lysyl-[glycine-cleavage complex H protein] + CO2. The glycine cleavage system catalyzes the degradation of glycine. The P protein binds the alpha-amino group of glycine through its pyridoxal phosphate cofactor; CO(2) is released and the remaining methylamine moiety is then transferred to the lipoamide cofactor of the H protein. This Prosthecochloris aestuarii (strain DSM 271 / SK 413) protein is Probable glycine dehydrogenase (decarboxylating) subunit 2.